Here is a 130-residue protein sequence, read N- to C-terminus: Glycine cleavage system H protein (130 aa).

Positions 25–107 (IATIGITEFA…YGEGWFLKVR (83 aa)) constitute a Lipoyl-binding domain. Lysine 66 carries the N6-lipoyllysine modification.

Belongs to the GcvH family. As to quaternary structure, the glycine cleavage system is composed of four proteins: P, T, L and H. The cofactor is (R)-lipoate.

Its function is as follows. The glycine cleavage system catalyzes the degradation of glycine. The H protein shuttles the methylamine group of glycine from the P protein to the T protein. The sequence is that of Glycine cleavage system H protein from Trichormus variabilis (strain ATCC 29413 / PCC 7937) (Anabaena variabilis).